We begin with the raw amino-acid sequence, 211 residues long: Ras-related protein rab-11.1 (211 aa).

18–26 (GDSGVGKSN) provides a ligand contact to GTP. Residues 40-48 (SKSTIGVEF) carry the Effector region motif. GTP is bound by residues 66–70 (DTAGQ), 124–127 (NKSD), and 154–156 (SAL). Positions 187–211 (GYGGGSGTIIPSPASDPPKKQCCIP) are disordered. 2 S-geranylgeranyl cysteine lipidation sites follow: Cys-208 and Cys-209.

This sequence belongs to the small GTPase superfamily. Rab family. As to quaternary structure, interacts with rei-1 and rei-2. The GDP-form preferentially binds to rei-1 and rei-2. In terms of tissue distribution, expressed weakly in sperm, but more predominantly in oocytes. Expressed in the intestine.

It is found in the cytoplasmic vesicle. Its subcellular location is the secretory vesicle. The protein localises to the endosome. It localises to the cytoplasm. The protein resides in the cytoskeleton. It is found in the spindle. Its subcellular location is the microtubule organizing center. The protein localises to the spindle pole body. It localises to the centrosome. The protein resides in the apical cell membrane. It is found in the cytosol. Its subcellular location is the recycling endosome membrane. The protein localises to the golgi apparatus membrane. It localises to the cytoplasmic granule. Its function is as follows. The small GTPases Rab are key regulators of intracellular membrane trafficking, from the formation of transport vesicles to their fusion with membranes. Rabs cycle between an inactive GDP-bound form and an active GTP-bound form that is able to recruit to membranes different set of downstream effectors directly responsible for vesicle formation, movement, tethering and fusion. Involved in regulating the meiotic maturation of oocytes. Plays a role in egg shell formation, regulating exocytosis of chondroitin proteoglycans following fertilization. Controls cortical granule localization and targets them to the plasma membrane for exocytosis. Acts as a major regulator of membrane delivery during cytokinesis. Regulates the cytoskeleton by facilitating astral microtubule elongation and organization during metaphase to ensure proper spindle alignment and polarity in the first embryonic cell division. Maintains normal endoplasmic reticulum morphology during metaphase. Involved in vesicle formation and plasma membrane repair following exposure to pore forming toxins. Regulates endocytic recycling. May play a role in yolk receptor endocytosis in growing oocytes. Plays a role in the shedding of pathogen spores from intestinal cells via its involvement in spore fusion and endocytic trafficking. In Caenorhabditis elegans, this protein is Ras-related protein rab-11.1.